A 716-amino-acid chain; its full sequence is Phosphoribosylformylglycinamidine synthase subunit PurL (716 aa).

His33 is a catalytic residue. Residue Tyr36 coordinates ATP. Residue Glu77 participates in Mg(2+) binding. Residues 78 to 81 (SHNH) and Arg100 each bind substrate. His79 (proton acceptor) is an active-site residue. Asp101 provides a ligand contact to Mg(2+). A substrate-binding site is contributed by Gln225. Residue Asp253 coordinates Mg(2+). 297–299 (ESQ) lines the substrate pocket. ATP-binding residues include Asn475 and Gly512. Asn513 serves as a coordination point for Mg(2+). Ser515 contributes to the substrate binding site.

The protein belongs to the FGAMS family. In terms of assembly, monomer. Part of the FGAM synthase complex composed of 1 PurL, 1 PurQ and 2 PurS subunits.

Its subcellular location is the cytoplasm. The catalysed reaction is N(2)-formyl-N(1)-(5-phospho-beta-D-ribosyl)glycinamide + L-glutamine + ATP + H2O = 2-formamido-N(1)-(5-O-phospho-beta-D-ribosyl)acetamidine + L-glutamate + ADP + phosphate + H(+). The protein operates within purine metabolism; IMP biosynthesis via de novo pathway; 5-amino-1-(5-phospho-D-ribosyl)imidazole from N(2)-formyl-N(1)-(5-phospho-D-ribosyl)glycinamide: step 1/2. In terms of biological role, part of the phosphoribosylformylglycinamidine synthase complex involved in the purines biosynthetic pathway. Catalyzes the ATP-dependent conversion of formylglycinamide ribonucleotide (FGAR) and glutamine to yield formylglycinamidine ribonucleotide (FGAM) and glutamate. The FGAM synthase complex is composed of three subunits. PurQ produces an ammonia molecule by converting glutamine to glutamate. PurL transfers the ammonia molecule to FGAR to form FGAM in an ATP-dependent manner. PurS interacts with PurQ and PurL and is thought to assist in the transfer of the ammonia molecule from PurQ to PurL. The protein is Phosphoribosylformylglycinamidine synthase subunit PurL of Methanosarcina mazei (strain ATCC BAA-159 / DSM 3647 / Goe1 / Go1 / JCM 11833 / OCM 88) (Methanosarcina frisia).